We begin with the raw amino-acid sequence, 243 residues long: UPF0246 protein gbs2036 (243 aa).

This sequence belongs to the UPF0246 family.

This Streptococcus agalactiae serotype III (strain NEM316) protein is UPF0246 protein gbs2036.